The sequence spans 321 residues: MPQHGRHAPRRGSMGFWPRKRASRIYPRIKTWPKIEEIKPLAFAAYKVGMTHTILNINGERVFTPVTVLEAPELLVIGAKAYKKENGALKEISSLYFNDLPQYVFRKIPKLKNYNFEEKKEQFLSKADNADEVKIIVSTQPWKIKLKKTPEIFDIPIGGSDVNKKLEYALSLLGKELSINDVFKEGQYVDVIAVTKGKGFQGVIKRFHVHRRQHKSEKGVRKVGAIGSRGPGRIFPTVPMPGQMGYHRRTEYNKLIIKIGEPLNVEGGWVRYGQVIGPTILLKGSVPGPRKRLIILREAIRPPRKQEKVEGIEYISLSPKN.

This sequence belongs to the universal ribosomal protein uL3 family. As to quaternary structure, part of the 50S ribosomal subunit. Forms a cluster with proteins L14 and L24e.

One of the primary rRNA binding proteins, it binds directly near the 3'-end of the 23S rRNA, where it nucleates assembly of the 50S subunit. This chain is Large ribosomal subunit protein uL3, found in Nanoarchaeum equitans (strain Kin4-M).